A 198-amino-acid chain; its full sequence is Holliday junction branch migration complex subunit RuvA (198 aa).

Residues 1 to 64 form a domain I region; the sequence is MYEYIKGKYI…EDFIGLYGFD (64 aa). A domain II region spans residues 65–143; that stretch reads SKEELEMFKL…PDELVDSSLE (79 aa). The segment at 144–149 is flexible linker; it reads IDTKDN. The domain III stretch occupies residues 150–198; that stretch reads ENVMALSEALSALIALGYSEKEAESVLKKIDKNDSVENIIKNALKALMG.

Belongs to the RuvA family. In terms of assembly, homotetramer. Forms an RuvA(8)-RuvB(12)-Holliday junction (HJ) complex. HJ DNA is sandwiched between 2 RuvA tetramers; dsDNA enters through RuvA and exits via RuvB. An RuvB hexamer assembles on each DNA strand where it exits the tetramer. Each RuvB hexamer is contacted by two RuvA subunits (via domain III) on 2 adjacent RuvB subunits; this complex drives branch migration. In the full resolvosome a probable DNA-RuvA(4)-RuvB(12)-RuvC(2) complex forms which resolves the HJ.

Its subcellular location is the cytoplasm. Its function is as follows. The RuvA-RuvB-RuvC complex processes Holliday junction (HJ) DNA during genetic recombination and DNA repair, while the RuvA-RuvB complex plays an important role in the rescue of blocked DNA replication forks via replication fork reversal (RFR). RuvA specifically binds to HJ cruciform DNA, conferring on it an open structure. The RuvB hexamer acts as an ATP-dependent pump, pulling dsDNA into and through the RuvAB complex. HJ branch migration allows RuvC to scan DNA until it finds its consensus sequence, where it cleaves and resolves the cruciform DNA. The sequence is that of Holliday junction branch migration complex subunit RuvA from Clostridium beijerinckii (strain ATCC 51743 / NCIMB 8052) (Clostridium acetobutylicum).